Here is a 378-residue protein sequence, read N- to C-terminus: Protein FAM185A (378 aa).

The chain is Protein FAM185A (Fam185a) from Mus musculus (Mouse).